The sequence spans 136 residues: ATP synthase epsilon chain, chloroplastic (136 aa).

The protein belongs to the ATPase epsilon chain family. As to quaternary structure, F-type ATPases have 2 components, CF(1) - the catalytic core - and CF(0) - the membrane proton channel. CF(1) has five subunits: alpha(3), beta(3), gamma(1), delta(1), epsilon(1). CF(0) has three main subunits: a, b and c.

It localises to the plastid. The protein localises to the chloroplast thylakoid membrane. Produces ATP from ADP in the presence of a proton gradient across the membrane. This is ATP synthase epsilon chain, chloroplastic from Cucumis sativus (Cucumber).